A 153-amino-acid polypeptide reads, in one-letter code: ORM1-like protein 1 (153 aa).

The Cytoplasmic segment spans residues 1-27 (MNVGVAHSEVNPNTRVMNSRGIWLTYA). A run of 2 helical transmembrane segments spans residues 28–46 (LGVG…FSVP) and 47–64 (VVWT…YVFM). Residues 65 to 105 (HAVKGTPFETPDQGKARLLTHWEQLDYGVQFTSSRKFFTIS) are Cytoplasmic-facing. A run of 2 helical transmembrane segments spans residues 106–123 (PIIL…DTAH) and 124–140 (FVIN…PKLP). Topologically, residues 141–153 (QLHGVRIFGINKY) are cytoplasmic.

This sequence belongs to the ORM family. Ceramide-sensitive subunit of the serine palmitoyltransferase (SPT) complex, which is also composed of SPTLC1, SPTLC2/3 and SPTSSA/B.

The protein resides in the endoplasmic reticulum membrane. Its function is as follows. Plays an essential role in the homeostatic regulation of sphingolipid de novo biosynthesis by modulating the activity of the serine palmitoyltransferase (SPT) in response to ceramide levels. When complexed to SPT, the binding of ceramides to its N-terminus stabilizes a conformation that block SPT substrate entry, hence preventing SPT catalytic activity. Through this mechanism, maintains ceramide levels at sufficient concentrations for the production of complex sphingolipids, but which prevents the accumulation of ceramides to levels that trigger apoptosis. In Danio rerio (Zebrafish), this protein is ORM1-like protein 1 (ormdl1).